A 68-amino-acid chain; its full sequence is Large ribosomal subunit protein uL29 (68 aa).

Belongs to the universal ribosomal protein uL29 family.

In Bradyrhizobium diazoefficiens (strain JCM 10833 / BCRC 13528 / IAM 13628 / NBRC 14792 / USDA 110), this protein is Large ribosomal subunit protein uL29.